A 78-amino-acid polypeptide reads, in one-letter code: Small ribosomal subunit protein uS17 (78 aa).

It belongs to the universal ribosomal protein uS17 family. In terms of assembly, part of the 30S ribosomal subunit.

In terms of biological role, one of the primary rRNA binding proteins, it binds specifically to the 5'-end of 16S ribosomal RNA. This is Small ribosomal subunit protein uS17 from Agrobacterium fabrum (strain C58 / ATCC 33970) (Agrobacterium tumefaciens (strain C58)).